Reading from the N-terminus, the 248-residue chain is Exosome complex component Rrp41 (248 aa).

The protein belongs to the RNase PH family. Rrp41 subfamily. As to quaternary structure, component of the archaeal exosome complex. Forms a hexameric ring-like arrangement composed of 3 Rrp41-Rrp42 heterodimers. The hexameric ring associates with a trimer of Rrp4 and/or Csl4 subunits.

The protein localises to the cytoplasm. Its function is as follows. Catalytic component of the exosome, which is a complex involved in RNA degradation. Has 3'-&gt;5' exoribonuclease activity. Can also synthesize heteromeric RNA-tails. The protein is Exosome complex component Rrp41 of Thermoplasma acidophilum (strain ATCC 25905 / DSM 1728 / JCM 9062 / NBRC 15155 / AMRC-C165).